We begin with the raw amino-acid sequence, 147 residues long: Protein OPG060 (147 aa).

This sequence belongs to the orthopoxvirus OPG058 family.

The polypeptide is Protein OPG060 (OPG060) (Bos taurus (Bovine)).